The following is a 253-amino-acid chain: Anamorsin homolog (253 aa).

The interval 4-129 is N-terminal SAM-like domain; the sequence is FKGLQKSLYI…ETGSSARLSF (126 aa). Positions 130–161 are linker; sequence AKKNSSTLNVWKISGDDDELIDEEDLLDEVDK. 4 residues coordinate [2Fe-2S] cluster: cysteine 172, cysteine 181, cysteine 184, and cysteine 186. The segment at 172–186 is fe-S binding site A; it reads CSTTGKRKACKNCSC. Cysteine 214, cysteine 217, cysteine 225, and cysteine 228 together coordinate [4Fe-4S] cluster. 2 consecutive short sequence motifs (cx2C motif) follow at residues 214-217 and 225-228; these read CGNC and CSSC. Residues 214–228 are fe-S binding site B; that stretch reads CGNCYLGDAFRCSSC.

Belongs to the anamorsin family. As to quaternary structure, monomer. [2Fe-2S] cluster is required as a cofactor. It depends on [4Fe-4S] cluster as a cofactor.

Its subcellular location is the cytoplasm. The protein resides in the mitochondrion intermembrane space. In terms of biological role, component of the cytosolic iron-sulfur (Fe-S) protein assembly (CIA) machinery. Required for the maturation of extramitochondrial Fe-S proteins. Part of an electron transfer chain functioning in an early step of cytosolic Fe-S biogenesis, facilitating the de novo assembly of a [4Fe-4S] cluster on the cytosolic Fe-S scaffold complex. Electrons are transferred from NADPH via a FAD- and FMN-containing diflavin oxidoreductase. Together with the diflavin oxidoreductase, also required for the assembly of the diferric tyrosyl radical cofactor of ribonucleotide reductase (RNR), probably by providing electrons for reduction during radical cofactor maturation in the catalytic small subunit. This chain is Anamorsin homolog, found in Drosophila willistoni (Fruit fly).